The chain runs to 367 residues: Undecaprenyl-phosphate alpha-N-acetylglucosaminyl 1-phosphate transferase (367 aa).

9 consecutive transmembrane segments (helical) span residues 3 to 23 (LLTA…FIFL), 45 to 65 (GVIP…MFGL), 69 to 89 (YIPH…VGAM), 129 to 149 (WELV…WAAI), 158 to 178 (IDGL…LILW), 187 to 207 (MWCF…LGIL), 213 to 233 (VFMG…LLLE), 242 to 262 (ISPV…VAIM), and 318 to 338 (VPEW…GYCI).

This sequence belongs to the glycosyltransferase 4 family. WecA subfamily. It depends on Mg(2+) as a cofactor. Requires Mn(2+) as cofactor.

Its subcellular location is the cell inner membrane. It carries out the reaction di-trans,octa-cis-undecaprenyl phosphate + UDP-N-acetyl-alpha-D-glucosamine = N-acetyl-alpha-D-glucosaminyl-di-trans,octa-cis-undecaprenyl diphosphate + UMP. It functions in the pathway bacterial outer membrane biogenesis; LPS O-antigen biosynthesis. The protein operates within bacterial outer membrane biogenesis; enterobacterial common antigen biosynthesis. Inhibited by tunicamycin. In terms of biological role, catalyzes the transfer of the GlcNAc-1-phosphate moiety from UDP-GlcNAc onto the carrier lipid undecaprenyl phosphate (C55-P), yielding GlcNAc-pyrophosphoryl-undecaprenyl (GlcNAc-PP-C55). The sequence is that of Undecaprenyl-phosphate alpha-N-acetylglucosaminyl 1-phosphate transferase from Salmonella typhimurium (strain LT2 / SGSC1412 / ATCC 700720).